The chain runs to 459 residues: MVKRYAVILAAGQGTRMKSKQYKVLHPVCGKPMVQHVVDQVLQLGIEKLITVVGFGAEQVKAQLGDQSEYAFQQEQLGTAHAVMQAAPYLQEKDGVTLVVCGDTPLITAETMQALLDHHLATNAKATILTAVADNPAGYGRIVRDAHGNVEKIVEHKDASEQERAIKEINTGTYCFDNKSLFEALTHVSNNNAQGEYYLTDVIEILKSNGSIISAYKAPSFEETIGVNDRVALAEAEKIMRERICRKHMMNGVTIIDPAHTYISAEVRIGRDTVIYPGTVIEGKTVIGEDCTIGPNSEIKDCWIGNGTTIRHSVAHDSEIGNDVTIGPFAHIRPSSKIDDEVRIGNFVEVKKSTFGKGSKASHLSYIGDAEVGVNVNLGCGSITVNYDGKNKHITKIEDGAFIGCNANLIAPVTVGKGAYVAAGSTITDDVPENALSIARARQVNKENYVDRLSIKKNS.

Residues 1-230 are pyrophosphorylase; the sequence is MVKRYAVILA…FEETIGVNDR (230 aa). Residues 9–12, Lys-23, Gln-73, and 78–79 contribute to the UDP-N-acetyl-alpha-D-glucosamine site; these read LAAG and GT. A Mg(2+)-binding site is contributed by Asp-103. Residues Gly-140, Glu-155, Asn-170, and Asn-228 each contribute to the UDP-N-acetyl-alpha-D-glucosamine site. Asn-228 is a Mg(2+) binding site. The interval 231-251 is linker; that stretch reads VALAEAEKIMRERICRKHMMN. The N-acetyltransferase stretch occupies residues 252-459; it reads GVTIIDPAHT…VDRLSIKKNS (208 aa). The UDP-N-acetyl-alpha-D-glucosamine site is built by Arg-333 and Lys-351. Residue His-363 is the Proton acceptor of the active site. The UDP-N-acetyl-alpha-D-glucosamine site is built by Tyr-366 and Asn-377. Residues 386-387, Ala-423, and Arg-440 each bind acetyl-CoA; that span reads NY.

In the N-terminal section; belongs to the N-acetylglucosamine-1-phosphate uridyltransferase family. It in the C-terminal section; belongs to the transferase hexapeptide repeat family. As to quaternary structure, homotrimer. Mg(2+) is required as a cofactor.

It is found in the cytoplasm. The catalysed reaction is alpha-D-glucosamine 1-phosphate + acetyl-CoA = N-acetyl-alpha-D-glucosamine 1-phosphate + CoA + H(+). The enzyme catalyses N-acetyl-alpha-D-glucosamine 1-phosphate + UTP + H(+) = UDP-N-acetyl-alpha-D-glucosamine + diphosphate. The protein operates within nucleotide-sugar biosynthesis; UDP-N-acetyl-alpha-D-glucosamine biosynthesis; N-acetyl-alpha-D-glucosamine 1-phosphate from alpha-D-glucosamine 6-phosphate (route II): step 2/2. It participates in nucleotide-sugar biosynthesis; UDP-N-acetyl-alpha-D-glucosamine biosynthesis; UDP-N-acetyl-alpha-D-glucosamine from N-acetyl-alpha-D-glucosamine 1-phosphate: step 1/1. It functions in the pathway bacterial outer membrane biogenesis; LPS lipid A biosynthesis. Its function is as follows. Catalyzes the last two sequential reactions in the de novo biosynthetic pathway for UDP-N-acetylglucosamine (UDP-GlcNAc). The C-terminal domain catalyzes the transfer of acetyl group from acetyl coenzyme A to glucosamine-1-phosphate (GlcN-1-P) to produce N-acetylglucosamine-1-phosphate (GlcNAc-1-P), which is converted into UDP-GlcNAc by the transfer of uridine 5-monophosphate (from uridine 5-triphosphate), a reaction catalyzed by the N-terminal domain. This is Bifunctional protein GlmU from Geobacillus sp. (strain WCH70).